The following is a 106-amino-acid chain: Aspartyl/glutamyl-tRNA(Asn/Gln) amidotransferase subunit C (106 aa).

This sequence belongs to the GatC family. In terms of assembly, heterotrimer of A, B and C subunits.

The catalysed reaction is L-glutamyl-tRNA(Gln) + L-glutamine + ATP + H2O = L-glutaminyl-tRNA(Gln) + L-glutamate + ADP + phosphate + H(+). The enzyme catalyses L-aspartyl-tRNA(Asn) + L-glutamine + ATP + H2O = L-asparaginyl-tRNA(Asn) + L-glutamate + ADP + phosphate + 2 H(+). Functionally, allows the formation of correctly charged Asn-tRNA(Asn) or Gln-tRNA(Gln) through the transamidation of misacylated Asp-tRNA(Asn) or Glu-tRNA(Gln) in organisms which lack either or both of asparaginyl-tRNA or glutaminyl-tRNA synthetases. The reaction takes place in the presence of glutamine and ATP through an activated phospho-Asp-tRNA(Asn) or phospho-Glu-tRNA(Gln). The protein is Aspartyl/glutamyl-tRNA(Asn/Gln) amidotransferase subunit C of Lactiplantibacillus plantarum (strain ATCC BAA-793 / NCIMB 8826 / WCFS1) (Lactobacillus plantarum).